We begin with the raw amino-acid sequence, 362 residues long: Protein-glutamate methylesterase/protein-glutamine glutaminase (362 aa).

Positions 10-127 (RVLVVDDSAF…SLNMHVARDE (118 aa)) constitute a Response regulatory domain. Residue aspartate 61 is modified to 4-aspartylphosphate. The CheB-type methylesterase domain maps to 173–362 (RLPRRLVLIG…DAITRAVGEG (190 aa)). Residues serine 184, histidine 211, and aspartate 304 contribute to the active site.

Belongs to the CheB family. Post-translationally, phosphorylated by CheA. Phosphorylation of the N-terminal regulatory domain activates the methylesterase activity.

The protein resides in the cytoplasm. The catalysed reaction is [protein]-L-glutamate 5-O-methyl ester + H2O = L-glutamyl-[protein] + methanol + H(+). The enzyme catalyses L-glutaminyl-[protein] + H2O = L-glutamyl-[protein] + NH4(+). Involved in chemotaxis. Part of a chemotaxis signal transduction system that modulates chemotaxis in response to various stimuli. Catalyzes the demethylation of specific methylglutamate residues introduced into the chemoreceptors (methyl-accepting chemotaxis proteins or MCP) by CheR. Also mediates the irreversible deamidation of specific glutamine residues to glutamic acid. This chain is Protein-glutamate methylesterase/protein-glutamine glutaminase, found in Symbiobacterium thermophilum (strain DSM 24528 / JCM 14929 / IAM 14863 / T).